A 443-amino-acid polypeptide reads, in one-letter code: MEYDDKLVRFRQGHLNPFDKKGGAERHPADSETQPCKDSSTSSPLSVPEYNYPDRVMDLGVSEDHFSRPVGLFLASDVQQLRQAIEECKQEILELPENSDRQKDAVVRLIHLRLKLQELNDPLEDEPNLRVLLEHRFYKEKSKSVKHLCDKCSTFIWGLIQTWYTCTGCSYSCHSKCLNLITKPCVRSKVSHQAEYELSICPEAGLDSQDYRCAECRTPISLRAVPSEARQCDYTGQYYCISCHWNDLAVIPARAIHNWDFEPCKVSRYSMRYLALMLGRPVLKLREINPLLFNYVEELVEIRKLRQDILLMKPYFITCKEAMEDRLLLQLQDRQHFVENDDMYSLQDLLDISSGRLGCSLTEIHTTFAKHIKLDCERCQAKGFMCELCKEGDILFPFDSHTSVCQDCAAVFHRDCYYENSTSCPRCMRLNLRKQVQNPGAEP.

The segment at 14–49 (HLNPFDKKGGAERHPADSETQPCKDSSTSSPLSVPE) is disordered. The span at 17–30 (PFDKKGGAERHPAD) shows a compositional bias: basic and acidic residues. The span at 31–45 (SETQPCKDSSTSSPL) shows a compositional bias: polar residues. 2 consecutive Phorbol-ester/DAG-type zinc fingers follow at residues 134–185 (EHRF…TKPC) and 364–424 (IHTT…STSC).

It belongs to the DEF8 family.

Positively regulates lysosome peripheral distribution and ruffled border formation in osteoclasts. Involved in bone resorption. The sequence is that of Differentially expressed in FDCP 8 homolog B (def8-b) from Xenopus laevis (African clawed frog).